Here is a 359-residue protein sequence, read N- to C-terminus: Guanine nucleotide-binding protein subunit alpha-11 (359 aa).

S-palmitoyl cysteine attachment occurs at residues Cys-9 and Cys-10. The G-alpha domain maps to 38 to 359 (RELKLLLLGT…QLNLKEYNLV (322 aa)). Residues 41–54 (KLLLLGTGESGKST) are G1 motif. Residues 46–53 (GTGESGKS) and 180–183 (LRVR) contribute to the GTP site. Ser-53 provides a ligand contact to Mg(2+). Residues 178–186 (DVLRVRVPT) are G2 motif. Thr-186 is a Mg(2+) binding site. The G3 motif stretch occupies residues 201 to 210 (FRMVDVGGQR). Residues 270–277 (ILFLNKKD) are G4 motif. GTP is bound by residues 274–277 (NKKD) and Ala-331. Positions 329–334 (TCATDT) are G5 motif.

It belongs to the G-alpha family. G(q) subfamily. G proteins are composed of 3 units; alpha, beta and gamma. The alpha chain contains the guanine nucleotide binding site. Interacts with RGS22. Interacts with NTSR1.

It is found in the cell membrane. The protein resides in the cytoplasm. The enzyme catalyses GTP + H2O = GDP + phosphate + H(+). Guanine nucleotide-binding proteins (G proteins) function as transducers downstream of G protein-coupled receptors (GPCRs) in numerous signaling cascades. The alpha chain contains the guanine nucleotide binding site and alternates between an active, GTP-bound state and an inactive, GDP-bound state. Signaling by an activated GPCR promotes GDP release and GTP binding. The alpha subunit has a low GTPase activity that converts bound GTP to GDP, thereby terminating the signal. Both GDP release and GTP hydrolysis are modulated by numerous regulatory proteins. Signaling is mediated via phospholipase C-beta-dependent inositol lipid hydrolysis for signal propagation: activates phospholipase C-beta: following GPCR activation, GNA11 activates PLC-beta (PLCB1, PLCB2, PLCB3 or PLCB4), leading to production of diacylglycerol (DAG) and inositol 1,4,5-trisphosphate (IP3). Transduces FFAR4 signaling in response to long-chain fatty acids (LCFAs). Together with GNAQ, required for heart development. In the respiratory epithelium, transmits OXGR1-dependent signals that lead to downstream intracellular Ca(2+) release and mucocilliary clearance of airborne pathogens. The protein is Guanine nucleotide-binding protein subunit alpha-11 (Gna11) of Mus musculus (Mouse).